A 128-amino-acid chain; its full sequence is Profilin (128 aa).

This sequence belongs to the profilin family.

In terms of biological role, more likely to influence phosphoinositide metabolism than actin assembly. In Homo sapiens (Human), this protein is Profilin.